The following is a 405-amino-acid chain: Tyrosine--tRNA ligase (405 aa).

Residues 46–55 (PTRPDIHLGH) carry the 'HIGH' region motif. A 'KMSKS' region motif is present at residues 230-234 (KMSKS). Residue Lys233 coordinates ATP. Positions 341–404 (MGLAALMVKA…GKKKFVKIVV (64 aa)) constitute an S4 RNA-binding domain.

Belongs to the class-I aminoacyl-tRNA synthetase family. TyrS type 2 subfamily. Homodimer.

The protein localises to the cytoplasm. The catalysed reaction is tRNA(Tyr) + L-tyrosine + ATP = L-tyrosyl-tRNA(Tyr) + AMP + diphosphate + H(+). Its function is as follows. Catalyzes the attachment of tyrosine to tRNA(Tyr) in a two-step reaction: tyrosine is first activated by ATP to form Tyr-AMP and then transferred to the acceptor end of tRNA(Tyr). The sequence is that of Tyrosine--tRNA ligase from Bdellovibrio bacteriovorus (strain ATCC 15356 / DSM 50701 / NCIMB 9529 / HD100).